Here is a 24-residue protein sequence, read N- to C-terminus: Potassium channel toxin alpha-KTx 6 OcyKTx5 (24 aa).

A disulfide bond links Cys-3 and Cys-24.

It belongs to the short scorpion toxin superfamily. Potassium channel inhibitor family. Alpha-KTx 06 subfamily. As to expression, expressed by the venom gland.

It is found in the secreted. In terms of biological role, blocks voltage-gated potassium channels. The protein is Potassium channel toxin alpha-KTx 6 OcyKTx5 of Opisthacanthus cayaporum (South American scorpion).